We begin with the raw amino-acid sequence, 578 residues long: 2-hydroxyacyl-CoA lyase 1 (578 aa).

Serine 4 is subject to Phosphoserine. Glutamate 60 contributes to the thiamine diphosphate binding site. N6-succinyllysine occurs at positions 351, 358, and 365. The tract at residues threonine 401–tyrosine 486 is thiamine pyrophosphate binding. Positions 455 and 482 each coordinate Mg(2+). Positions serine 576–methionine 578 match the Microbody targeting signal motif.

The protein belongs to the TPP enzyme family. As to quaternary structure, homotetramer. Requires Mg(2+) as cofactor. It depends on thiamine diphosphate as a cofactor. As to expression, widely expressed.

It localises to the peroxisome. It catalyses the reaction a 2-hydroxy-3-methyl fatty acyl-CoA = a 2-methyl-branched fatty aldehyde + formyl-CoA. The catalysed reaction is an (R)-2-hydroxy-long-chain-fatty acyl-CoA = a long-chain fatty aldehyde + formyl-CoA. The enzyme catalyses 2-hydroxy-3-methylhexadecanoyl-CoA = 2-methylpentadecanal + formyl-CoA. It carries out the reaction 2-hydroxyoctadecanoyl-CoA = heptadecanal + formyl-CoA. It catalyses the reaction 2-hydroxyphytanoyl-CoA = 2,6,10,14-tetramethylpentadecanal + formyl-CoA. Its pathway is lipid metabolism; fatty acid metabolism. In terms of biological role, peroxisomal 2-OH acyl-CoA lyase involved in the cleavage (C1 removal) reaction in the fatty acid alpha-oxydation in a thiamine pyrophosphate (TPP)-dependent manner. Involved in the degradation of 3-methyl-branched fatty acids like phytanic acid and the shortening of 2-hydroxy long-chain fatty acids. Plays a significant role in the biosynthesis of heptadecanal in the liver. The protein is 2-hydroxyacyl-CoA lyase 1 of Homo sapiens (Human).